Consider the following 624-residue polypeptide: Chaperone protein HtpG (624 aa).

The tract at residues 1-336 is a; substrate-binding; that stretch reads MKGQETRGFQ…SNDLPLNVSR (336 aa). The segment at 337–552 is b; sequence EILQDSSITR…NDEMSTQMAK (216 aa). Positions 553–624 are c; the sequence is LFAAAGQAVP…IRRMNQLLVS (72 aa).

Belongs to the heat shock protein 90 family. In terms of assembly, homodimer.

Its subcellular location is the cytoplasm. Functionally, molecular chaperone. Has ATPase activity. In Cronobacter sakazakii (strain ATCC BAA-894) (Enterobacter sakazakii), this protein is Chaperone protein HtpG.